A 190-amino-acid polypeptide reads, in one-letter code: Threonylcarbamoyl-AMP synthase (190 aa).

In terms of domain architecture, YrdC-like spans T7–G190.

Belongs to the SUA5 family. TsaC subfamily.

It localises to the cytoplasm. It catalyses the reaction L-threonine + hydrogencarbonate + ATP = L-threonylcarbamoyladenylate + diphosphate + H2O. Required for the formation of a threonylcarbamoyl group on adenosine at position 37 (t(6)A37) in tRNAs that read codons beginning with adenine. Catalyzes the conversion of L-threonine, HCO(3)(-)/CO(2) and ATP to give threonylcarbamoyl-AMP (TC-AMP) as the acyladenylate intermediate, with the release of diphosphate. This Salmonella typhi protein is Threonylcarbamoyl-AMP synthase.